The following is a 278-amino-acid chain: Protoheme IX farnesyltransferase 1 (278 aa).

9 helical membrane-spanning segments follow: residues 12–32 (VIWL…GGVD), 35–55 (LFSL…FNHY), 76–96 (LITP…GISL), 98–118 (FLLL…FYAV), 129–149 (WLNI…GYAL), 158–178 (AVLI…ALAF), 199–221 (ERAV…WLYL), 226–248 (GAGG…YAAV), and 255–275 (MWKM…ALIL).

It belongs to the UbiA prenyltransferase family. Protoheme IX farnesyltransferase subfamily.

It localises to the cell membrane. The catalysed reaction is heme b + (2E,6E)-farnesyl diphosphate + H2O = Fe(II)-heme o + diphosphate. The protein operates within porphyrin-containing compound metabolism; heme O biosynthesis; heme O from protoheme: step 1/1. Functionally, converts heme B (protoheme IX) to heme O by substitution of the vinyl group on carbon 2 of heme B porphyrin ring with a hydroxyethyl farnesyl side group. In Pyrobaculum aerophilum (strain ATCC 51768 / DSM 7523 / JCM 9630 / CIP 104966 / NBRC 100827 / IM2), this protein is Protoheme IX farnesyltransferase 1.